We begin with the raw amino-acid sequence, 293 residues long: Shikimate dehydrogenase (NADP(+)) (293 aa).

Shikimate contacts are provided by residues 26–28 (SKS) and T73. The Proton acceptor role is filled by K77. Residue E89 coordinates NADP(+). Residues N98 and D113 each coordinate shikimate. NADP(+) is bound by residues 137–141 (GAGGA), 161–166 (NRTRQR), and I231. Y233 lines the shikimate pocket. G254 contacts NADP(+).

This sequence belongs to the shikimate dehydrogenase family. As to quaternary structure, homodimer.

The enzyme catalyses shikimate + NADP(+) = 3-dehydroshikimate + NADPH + H(+). The protein operates within metabolic intermediate biosynthesis; chorismate biosynthesis; chorismate from D-erythrose 4-phosphate and phosphoenolpyruvate: step 4/7. Its function is as follows. Involved in the biosynthesis of the chorismate, which leads to the biosynthesis of aromatic amino acids. Catalyzes the reversible NADPH linked reduction of 3-dehydroshikimate (DHSA) to yield shikimate (SA). This Bartonella quintana (strain Toulouse) (Rochalimaea quintana) protein is Shikimate dehydrogenase (NADP(+)).